Reading from the N-terminus, the 537-residue chain is MSTKYIFVTGGVVSSIGKGIVAASLGRLLKNRGLKVTIQKFDPYINIDPGTMSPYQHGEVFVTDDGAETDLDLGHYERFIDINLNKYSNVTTGKIYSEVLRKERKGEYLGATVQVIPHITDALKDKIKRAARTTDSDVIITEVGGTVGDIESLPFLEALRQMKADVGADNVMYIHTTLLPYLKAAGEMKTKPTQHSVKELRGLGIQPNMLVIRTEKPAGQNIKNKLAQFCDVAPEAVIESLDVEHLYQIPLDLQAQKMDQIVCDHLKLDVPAADMTEWSAMVEKVMSLEKQVRIALVGKYVELPDAYISVVEALKHAGYANDAEVKIDWIDANQVTVENAAELLGSADGIIVPGGFGQRGTEGKIQTIRYAREQDVPMLGVCLGMQLTCVEFARHVLGLADANSAELNPDTPFPIIDLMRDQIDVEDLGGTLRLGLYPSKLKSGSKAAAAYDHQEVVQRRHRHRYEFNNAFREQFEAAGFVFSGVSPDNRLVEIVEIPENKFFVACQYHPELSSRPNRPEGLYTAFVTAAVEKSSDR.

Positions 1–268 are amidoligase domain; it reads MSTKYIFVTG…DQIVCDHLKL (268 aa). Residue Ser-14 coordinates CTP. Ser-14 lines the UTP pocket. 15–20 contributes to the ATP binding site; the sequence is SIGKGI. L-glutamine is bound at residue Tyr-55. Position 72 (Asp-72) interacts with ATP. Positions 72 and 142 each coordinate Mg(2+). Residues 149–151, 189–194, and Lys-225 contribute to the CTP site; these read DIE and KTKPTQ. UTP is bound by residues 189–194 and Lys-225; that span reads KTKPTQ. The Glutamine amidotransferase type-1 domain maps to 293-536; it reads RIALVGKYVE…VTAAVEKSSD (244 aa). Residue Gly-355 coordinates L-glutamine. The active-site Nucleophile; for glutamine hydrolysis is Cys-382. Residues 383-386, Glu-406, and Arg-464 each bind L-glutamine; that span reads LGMQ. Residues His-509 and Glu-511 contribute to the active site.

Belongs to the CTP synthase family. Homotetramer.

The catalysed reaction is UTP + L-glutamine + ATP + H2O = CTP + L-glutamate + ADP + phosphate + 2 H(+). It catalyses the reaction L-glutamine + H2O = L-glutamate + NH4(+). It carries out the reaction UTP + NH4(+) + ATP = CTP + ADP + phosphate + 2 H(+). The protein operates within pyrimidine metabolism; CTP biosynthesis via de novo pathway; CTP from UDP: step 2/2. With respect to regulation, allosterically activated by GTP, when glutamine is the substrate; GTP has no effect on the reaction when ammonia is the substrate. The allosteric effector GTP functions by stabilizing the protein conformation that binds the tetrahedral intermediate(s) formed during glutamine hydrolysis. Inhibited by the product CTP, via allosteric rather than competitive inhibition. In terms of biological role, catalyzes the ATP-dependent amination of UTP to CTP with either L-glutamine or ammonia as the source of nitrogen. Regulates intracellular CTP levels through interactions with the four ribonucleotide triphosphates. The protein is CTP synthase of Streptococcus sanguinis (strain SK36).